We begin with the raw amino-acid sequence, 346 residues long: Leucine zipper protein 2 (346 aa).

Positions 1 to 17 (MKFIGAVYLLFLLPALS) are cleaved as a signal peptide. Residues Asn19 and Asn131 are each glycosylated (N-linked (GlcNAc...) asparagine). Positions 41-209 (RHLSKTSKEL…QLKALKDTVH (169 aa)) form a coiled coil. The tract at residues 162–190 (LRYGKKDLIFKGQQLMDLENKLKVAKDEL) is leucine-zipper. Residues Asn241 and Asn296 are each glycosylated (N-linked (GlcNAc...) asparagine). A disordered region spans residues 271–346 (SAVMRRESTG…LKKTQSDKHN (76 aa)). Positions 293 to 324 (CSHNQTESSSVMKKTFGHSQSKTPEQNGQGQA) are enriched in polar residues. The span at 326–346 (TAEESVKTDGELKKTQSDKHN) shows a compositional bias: basic and acidic residues.

The protein resides in the secreted. In Danio rerio (Zebrafish), this protein is Leucine zipper protein 2 (luzp2).